We begin with the raw amino-acid sequence, 341 residues long: Probable sulfurtransferase (341 aa).

Zn(2+)-binding residues include Cys-40, Cys-42, Cys-58, and Cys-61. Gly-88 lines the ATP pocket. Residues Cys-176 and Cys-179 each coordinate [4Fe-4S] cluster. Positions 183 and 202 each coordinate ATP. Position 267 (Cys-267) interacts with [4Fe-4S] cluster. Zn(2+) is bound by residues Cys-316, Cys-319, Cys-328, and Cys-331.

Belongs to the TtcA family. The cofactor is [4Fe-4S] cluster. Requires Mg(2+) as cofactor.

In Methanocaldococcus jannaschii (strain ATCC 43067 / DSM 2661 / JAL-1 / JCM 10045 / NBRC 100440) (Methanococcus jannaschii), this protein is Probable sulfurtransferase.